The primary structure comprises 876 residues: DNA gyrase subunit A (876 aa).

The region spanning 34–532 (LPDVRDGLKP…NSVDINIEDL (499 aa)) is the Topo IIA-type catalytic domain. Tyr122 serves as the catalytic O-(5'-phospho-DNA)-tyrosine intermediate. The GyrA-box motif lies at 559-565 (QRRGGKG). The segment at 844-876 (DEELDAIDGSAAEGDEDIAPEADTDDDIAEDEE) is disordered. Positions 856–876 (EGDEDIAPEADTDDDIAEDEE) are enriched in acidic residues.

The protein belongs to the type II topoisomerase GyrA/ParC subunit family. In terms of assembly, heterotetramer, composed of two GyrA and two GyrB chains. In the heterotetramer, GyrA contains the active site tyrosine that forms a transient covalent intermediate with DNA, while GyrB binds cofactors and catalyzes ATP hydrolysis.

The protein resides in the cytoplasm. The enzyme catalyses ATP-dependent breakage, passage and rejoining of double-stranded DNA.. Its function is as follows. A type II topoisomerase that negatively supercoils closed circular double-stranded (ds) DNA in an ATP-dependent manner to modulate DNA topology and maintain chromosomes in an underwound state. Negative supercoiling favors strand separation, and DNA replication, transcription, recombination and repair, all of which involve strand separation. Also able to catalyze the interconversion of other topological isomers of dsDNA rings, including catenanes and knotted rings. Type II topoisomerases break and join 2 DNA strands simultaneously in an ATP-dependent manner. The sequence is that of DNA gyrase subunit A from Klebsiella oxytoca.